The chain runs to 686 residues: MATDPRKILVTCALPYANGSIHLGHMLEHIQADIWVRYQRLRGNDINFICADDAHGTPIMLKAQQMGITPEEMIAAVSEEHQKDFAGFDISFDNYHSTHSDENRELASSIYLELKKNGFITSRTISQLFDPEKEMFLPDRFVKGTCPKCKSEEQYGDNCDNCGETYSPTDLINPKSAVSGATPVMKDSEHFFFDLPQFESMLKEWTRSGSLQTETANKMQEWFESGLQQWDISRDAPYFGFEIPGETNKFFYVWLDAPIGYMGSFKNLCDKRDDLDFDEYWKLNSTTELYHFIGKDIVYFHSLFWPAMLDGAGFRKPNNVFVHGYVTVNGAKMSKSKGTFIKAGTYLNHLDPECLRYYYAAKLNSRIDDIDLNLEDFTQRVNSDVVNKIVNLASRNAGFITKRFDGKLSDNFVAPELYNEFVAASDRIAELYETREFSRAIREITALADKANQYIDEKAPWVLAKEEGKEQELQEVASVGINLFRVLMAYLKPVMPELAARTEAFLNETLTWECIAQPLTSHEITKFKALFNRIDPKKVEAMVEESKEDAAIEMAAKEKAEAEKEKANQTELDKEPIADEIEFDAFEAVDMRIARIISCEEIPKANKLLKFQLDIGGETRQVFSGIKSAYTPEELVGKHTVMVANLKPRKMKFGMSEGMILAAGPGGKDLWILEPHEGAQPGMRVM.

A 'HIGH' region motif is present at residues 15-25 (PYANGSIHLGH). Residues Cys-146, Cys-149, Cys-159, and Cys-162 each contribute to the Zn(2+) site. Positions 332–336 (KMSKS) match the 'KMSKS' region motif. Lys-335 lines the ATP pocket. One can recognise a tRNA-binding domain in the interval 585–686 (AFEAVDMRIA…EGAQPGMRVM (102 aa)).

It belongs to the class-I aminoacyl-tRNA synthetase family. MetG type 1 subfamily. Homodimer. Requires Zn(2+) as cofactor.

It localises to the cytoplasm. The enzyme catalyses tRNA(Met) + L-methionine + ATP = L-methionyl-tRNA(Met) + AMP + diphosphate. Is required not only for elongation of protein synthesis but also for the initiation of all mRNA translation through initiator tRNA(fMet) aminoacylation. The sequence is that of Methionine--tRNA ligase from Aliivibrio salmonicida (strain LFI1238) (Vibrio salmonicida (strain LFI1238)).